Consider the following 37-residue polypeptide: Neuropeptide Y2-like conopeptide (37 aa).

Tyr-37 is subject to Tyrosine amide.

This sequence belongs to the NPY family. In terms of tissue distribution, expressed by the venom duct.

It localises to the secreted. Functionally, causes hyperactivity such as jumping, rapid circling and tail flicking, after intraventicular injection into mouse brain. This chain is Neuropeptide Y2-like conopeptide, found in Conus betulinus (Beech cone).